Consider the following 46-residue polypeptide: Lantibiotic streptin (46 aa).

Residues 1–24 (MNNTIKDFDLDLKTNKKDTATPYV) constitute a propeptide that is removed on maturation.

This sequence belongs to the type A lantibiotic family. In terms of processing, maturation of lantibiotics involves the enzymatic conversion of Thr, and Ser into dehydrated AA and the formation of thioether bonds with cysteine. This is followed by membrane translocation and cleavage of the modified precursor.

In terms of biological role, lanthionine-containing peptide antibiotic (lantibiotic) active on certain Gram-positive bacteria. The bactericidal activity of lantibiotics is based on depolarization of energized bacterial cytoplasmic membranes, initiated by the formation of aqueous transmembrane pores. The polypeptide is Lantibiotic streptin (srtA) (Streptococcus pyogenes serotype M1).